Reading from the N-terminus, the 262-residue chain is tRNA U34 carboxymethyltransferase (262 aa).

Carboxy-S-adenosyl-L-methionine contacts are provided by residues K25, W39, K44, G63, V114–E115, Y135, and R250.

It belongs to the class I-like SAM-binding methyltransferase superfamily. CmoB family. In terms of assembly, homotetramer.

It carries out the reaction carboxy-S-adenosyl-L-methionine + 5-hydroxyuridine(34) in tRNA = 5-carboxymethoxyuridine(34) in tRNA + S-adenosyl-L-homocysteine + H(+). Functionally, catalyzes carboxymethyl transfer from carboxy-S-adenosyl-L-methionine (Cx-SAM) to 5-hydroxyuridine (ho5U) to form 5-carboxymethoxyuridine (cmo5U) at position 34 in tRNAs. The chain is tRNA U34 carboxymethyltransferase from Helicobacter acinonychis (strain Sheeba).